The chain runs to 205 residues: Small ribosomal subunit protein uS4 (205 aa).

The tract at residues 18–45 (NIWGRPKSPVNRREYGPGQHGQRRKGKL) is disordered. Residues 94-157 (RRLDTVVYRA…KQLAFVLEAS (64 aa)) enclose the S4 RNA-binding domain.

Belongs to the universal ribosomal protein uS4 family. Part of the 30S ribosomal subunit. Contacts protein S5. The interaction surface between S4 and S5 is involved in control of translational fidelity.

One of the primary rRNA binding proteins, it binds directly to 16S rRNA where it nucleates assembly of the body of the 30S subunit. In terms of biological role, with S5 and S12 plays an important role in translational accuracy. The polypeptide is Small ribosomal subunit protein uS4 (Rhodopseudomonas palustris (strain BisA53)).